We begin with the raw amino-acid sequence, 142 residues long: Hemoglobin subunit alpha-1 (142 aa).

S1 bears the N-acetylserine mark. The Globin domain occupies 1–142 (SLSDKDKAAV…VALALAQRYR (142 aa)). H59 is an O2 binding site. Residue H88 coordinates heme b.

The protein belongs to the globin family. Hb1 is a heterotetramer of two alpha-2 chains and two beta chains. Red blood cells.

Functionally, involved in oxygen transport from gills to the various peripheral tissues. In Notothenia neglecta (Yellowbelly rockcod), this protein is Hemoglobin subunit alpha-1 (hba1).